The primary structure comprises 544 residues: Chaperonin GroEL (544 aa).

Residues 29-32 (TLGP), Lys-50, 86-90 (DGTTT), Gly-414, and Asp-494 each bind ATP.

This sequence belongs to the chaperonin (HSP60) family. In terms of assembly, forms a cylinder of 14 subunits composed of two heptameric rings stacked back-to-back. Interacts with the co-chaperonin GroES.

The protein resides in the cytoplasm. The enzyme catalyses ATP + H2O + a folded polypeptide = ADP + phosphate + an unfolded polypeptide.. Functionally, together with its co-chaperonin GroES, plays an essential role in assisting protein folding. The GroEL-GroES system forms a nano-cage that allows encapsulation of the non-native substrate proteins and provides a physical environment optimized to promote and accelerate protein folding. This is Chaperonin GroEL from Amoebophilus asiaticus (strain 5a2).